We begin with the raw amino-acid sequence, 500 residues long: Glutamate--tRNA ligase (500 aa).

Positions 12 to 22 (PSPTGHLHIGN) match the 'HIGH' region motif. The 'KMSKS' region motif lies at 259–263 (KLSKR). Lysine 262 is an ATP binding site.

The protein belongs to the class-I aminoacyl-tRNA synthetase family. Glutamate--tRNA ligase type 1 subfamily. In terms of assembly, monomer.

The protein localises to the cytoplasm. The catalysed reaction is tRNA(Glu) + L-glutamate + ATP = L-glutamyl-tRNA(Glu) + AMP + diphosphate. Its function is as follows. Catalyzes the attachment of glutamate to tRNA(Glu) in a two-step reaction: glutamate is first activated by ATP to form Glu-AMP and then transferred to the acceptor end of tRNA(Glu). This Lactobacillus delbrueckii subsp. bulgaricus (strain ATCC BAA-365 / Lb-18) protein is Glutamate--tRNA ligase.